The sequence spans 426 residues: Phosphomethylpyrimidine synthase (426 aa).

Substrate is bound by residues asparagine 65, methionine 94, tyrosine 123, histidine 162, 184-186, 225-228, and glutamate 264; these read SRG and DGMR. Residue histidine 268 coordinates Zn(2+). Tyrosine 291 is a binding site for substrate. Residue histidine 332 coordinates Zn(2+). 3 residues coordinate [4Fe-4S] cluster: cysteine 408, cysteine 411, and cysteine 415.

The protein belongs to the ThiC family. [4Fe-4S] cluster is required as a cofactor.

The catalysed reaction is 5-amino-1-(5-phospho-beta-D-ribosyl)imidazole + S-adenosyl-L-methionine = 4-amino-2-methyl-5-(phosphooxymethyl)pyrimidine + CO + 5'-deoxyadenosine + formate + L-methionine + 3 H(+). The protein operates within cofactor biosynthesis; thiamine diphosphate biosynthesis. Functionally, catalyzes the synthesis of the hydroxymethylpyrimidine phosphate (HMP-P) moiety of thiamine from aminoimidazole ribotide (AIR) in a radical S-adenosyl-L-methionine (SAM)-dependent reaction. The polypeptide is Phosphomethylpyrimidine synthase (Methanococcus aeolicus (strain ATCC BAA-1280 / DSM 17508 / OCM 812 / Nankai-3)).